The following is a 360-amino-acid chain: Cyclin-dependent kinase 10 (360 aa).

Positions 39-323 (FEKLNRIGEG…AGDCLESSYF (285 aa)) constitute a Protein kinase domain. Residues 45-53 (IGEGTYGIV) and lysine 68 contribute to the ATP site. The Proton acceptor role is filled by aspartate 163. A Phosphothreonine modification is found at threonine 196. The disordered stretch occupies residues 334-360 (LMPTFPHHRNKRAAPATSEGQSKRCKP).

This sequence belongs to the protein kinase superfamily. CMGC Ser/Thr protein kinase family. CDC2/CDKX subfamily. Heterodimer with CCNQ, the interaction is required for kinase activity. Interacts with ETS2. Interacts with PRK2.

Its subcellular location is the cytoplasm. It is found in the cytoskeleton. The protein localises to the cilium basal body. It carries out the reaction L-seryl-[protein] + ATP = O-phospho-L-seryl-[protein] + ADP + H(+). It catalyses the reaction L-threonyl-[protein] + ATP = O-phospho-L-threonyl-[protein] + ADP + H(+). In terms of biological role, cyclin-dependent kinase that phosphorylates the transcription factor ETS2 (in vitro) and positively controls its proteasomal degradation (in cells). Involved in the regulation of actin cytoskeleton organization through the phosphorylation of actin dynamics regulators such as PKN2. Is a negative regulator of ciliogenesis through phosphorylation of PKN2 and promotion of RhoA signaling. This is Cyclin-dependent kinase 10 (CDK10) from Homo sapiens (Human).